The primary structure comprises 437 residues: Putative ankyrin repeat protein FPV014 (437 aa).

ANK repeat units lie at residues 32–61, 65–94, 99–128, 131–160, 164–195, 197–226, and 230–259; these read YGCSLLHCAVENGNTEIARILLLEGANPDL, STPTALHRAVILRHYDIVNLLMEFNVDPDN, ESRTPLEYAVKLNDVKMTKTLLDYGADAED, RFNCPINDAAANGNLEICKLLIDAGARINS, GSVYTIHHAIRSGNYELVVELLSRGALPDVED, LSFSSLHHAVMEGSADMVLTLLEHGASVDV, and CGRTPLFLAANASELDIVKVLLDFWADTSV.

This is Putative ankyrin repeat protein FPV014 from Fowlpox virus (strain NVSL) (FPV).